Consider the following 185-residue polypeptide: dCTP deaminase (185 aa).

DCTP-binding positions include 107-112, 131-133, Gln-152, Tyr-166, and Gln-176; these read KSTYAR and TLE. Glu-133 (proton donor/acceptor) is an active-site residue.

The protein belongs to the dCTP deaminase family. Homotrimer.

It carries out the reaction dCTP + H2O + H(+) = dUTP + NH4(+). It participates in pyrimidine metabolism; dUMP biosynthesis; dUMP from dCTP (dUTP route): step 1/2. Catalyzes the deamination of dCTP to dUTP. The protein is dCTP deaminase of Neorickettsia sennetsu (strain ATCC VR-367 / Miyayama) (Ehrlichia sennetsu).